We begin with the raw amino-acid sequence, 828 residues long: MKLSRRSFMKANAVAAAAAAAGLSVPGVARAVVGQQEAIKWDKAPCRFCGTGCGVLVGTQQGRVVACQGDPDAPVNRGLNCIKGYFLPKIMYGKDRLTQPLLRMKNGKYDKEGEFTPITWDQAFDVMEEKFKTALKEKGPESIGMFGSGQWTIWEGYAASKLFKAGFRSNNIDPNARHCMASAVVGFMRTFGMDEPMGCYDDIEQADAFVLWGANMAEMHPILWSRITNSRLSNQNVTVAVLSTYQHRSFELADNGIIFTPQSDLVILNYIANYIIQNNAINQDFFSKHVNLRKGATDIGYGLRPTHPLEKAAKNPGSDASEPMSFEDYKAFVAEYTLEKTAEMTGVPKDQLEQLAQLYADPNKKVISYWTMGFNQHTRGVWANNLVYNLHLLTGKISQPGCGPFSLTGQPSACGTAREVGTFAHRLPADMVVTNEKHRDICEKKWNIPSGTIPAKIGLHAVAQDRALKDGKLNVYWTMCTNNMQAGPNINEERMPGWRDPRNFIIVSDPYPTVSALAADLILPTAMWVEKEGAYGNAERRTQFWRQQVQAPGEAKSDLWQLVQFSRRFKTEEVWPEELLAKKPELRGKTLYEVLYATPEVSKFPVSELAEDQLNDESRELGFYRQKGLFEEYACFGRGHGHDLAPFDDYHKARVLRWPVVNGKETQWRYSEGNDPYVKAGEGYKFYGKPDGKAVIFALPFEPAAEAPDEEYDLWLSTGRVLEHWHTGSMTRRVPELHRAFPEAVLFIHPLDAKARDLRRGDKVKVVSRRGEVISIVETRGRNRPPQGLVYMPFFDAAQLVNKLTLDATDPLSKETDFKKCAVKLEKV.

The tat-type signal signal peptide spans 1–31 (MKLSRRSFMKANAVAAAAAAAGLSVPGVARA). The 4Fe-4S Mo/W bis-MGD-type domain occupies 39–95 (IKWDKAPCRFCGTGCGVLVGTQQGRVVACQGDPDAPVNRGLNCIKGYFLPKIMYGKD). Residues C46, C49, C53, and C81 each contribute to the [4Fe-4S] cluster site. Residues K83, Q150, N175, C179, 212–219 (WGANMAEM), 243–247 (STYQH), 262–264 (QSD), M372, Q376, N482, 508–509 (SD), K531, D558, and 718–727 (TGRVLEHWHT) contribute to the Mo-bis(molybdopterin guanine dinucleotide) site. F794 is a substrate binding site. N802 and K819 together coordinate Mo-bis(molybdopterin guanine dinucleotide).

This sequence belongs to the prokaryotic molybdopterin-containing oxidoreductase family. NasA/NapA/NarB subfamily. In terms of assembly, component of the periplasmic nitrate reductase NapAB complex composed of NapA and NapB. [4Fe-4S] cluster serves as cofactor. Mo-bis(molybdopterin guanine dinucleotide) is required as a cofactor. In terms of processing, predicted to be exported by the Tat system. The position of the signal peptide cleavage has not been experimentally proven.

The protein localises to the periplasm. The catalysed reaction is 2 Fe(II)-[cytochrome] + nitrate + 2 H(+) = 2 Fe(III)-[cytochrome] + nitrite + H2O. Functionally, catalytic subunit of the periplasmic nitrate reductase complex NapAB. Receives electrons from NapB and catalyzes the reduction of nitrate to nitrite. The sequence is that of Periplasmic nitrate reductase from Shigella flexneri serotype 5b (strain 8401).